The primary structure comprises 226 residues: Fibrillarin-like rRNA/tRNA 2'-O-methyltransferase (226 aa).

S-adenosyl-L-methionine is bound by residues 85-86 (TT), 104-105 (EF), 129-130 (DA), and 149-152 (DVAQ).

Belongs to the methyltransferase superfamily. Fibrillarin family. In terms of assembly, interacts with nop5. Component of box C/D small ribonucleoprotein (sRNP) particles that contain rpl7ae, FlpA and nop5, plus a guide RNA.

In terms of biological role, involved in pre-rRNA and tRNA processing. Utilizes the methyl donor S-adenosyl-L-methionine to catalyze the site-specific 2'-hydroxyl methylation of ribose moieties in rRNA and tRNA. Site specificity is provided by a guide RNA that base pairs with the substrate. Methylation occurs at a characteristic distance from the sequence involved in base pairing with the guide RNA. The protein is Fibrillarin-like rRNA/tRNA 2'-O-methyltransferase of Thermococcus onnurineus (strain NA1).